The sequence spans 156 residues: Small ribosomal subunit protein uS7 (156 aa).

The protein belongs to the universal ribosomal protein uS7 family. As to quaternary structure, part of the 30S ribosomal subunit. Contacts proteins S9 and S11.

Its function is as follows. One of the primary rRNA binding proteins, it binds directly to 16S rRNA where it nucleates assembly of the head domain of the 30S subunit. Is located at the subunit interface close to the decoding center, probably blocks exit of the E-site tRNA. This is Small ribosomal subunit protein uS7 from Dechloromonas aromatica (strain RCB).